Here is a 234-residue protein sequence, read N- to C-terminus: Sugar fermentation stimulation protein A (234 aa).

The H-T-H motif DNA-binding region spans 201–220; that stretch reads LLSEAQNKGVEVLAYKAELS.

Belongs to the SfsA family.

Its function is as follows. Binds to DNA non-specifically. Could be a regulatory factor involved in maltose metabolism. This Salmonella dublin (strain CT_02021853) protein is Sugar fermentation stimulation protein A.